The chain runs to 234 residues: Ribulose-phosphate 3-epimerase (234 aa).

Residue serine 7 coordinates substrate. A divalent metal cation contacts are provided by histidine 32, aspartate 34, and histidine 65. Aspartate 34 functions as the Proton acceptor in the catalytic mechanism. Substrate-binding positions include histidine 65, 139–142 (GFSG), 172–174 (DGG), and 194–195 (AS). Aspartate 172 contacts a divalent metal cation. The active-site Proton donor is the aspartate 172.

It belongs to the ribulose-phosphate 3-epimerase family. A divalent metal cation is required as a cofactor.

It carries out the reaction D-ribulose 5-phosphate = D-xylulose 5-phosphate. It participates in carbohydrate degradation. Functionally, catalyzes the reversible epimerization of D-ribulose 5-phosphate to D-xylulose 5-phosphate. The polypeptide is Ribulose-phosphate 3-epimerase (Methanocaldococcus jannaschii (strain ATCC 43067 / DSM 2661 / JAL-1 / JCM 10045 / NBRC 100440) (Methanococcus jannaschii)).